Here is a 212-residue protein sequence, read N- to C-terminus: dITP/XTP pyrophosphatase (212 aa).

Residue 7 to 12 (SRNKKK) coordinates substrate. Aspartate 72 acts as the Proton acceptor in catalysis. Aspartate 72 lines the Mg(2+) pocket. Residues serine 73, 163–166 (FGYD), lysine 187, and 192–193 (HR) each bind substrate. The disordered stretch occupies residues 164–194 (GYDPLFEPAEAPGQSSAELTPERKDELSHRG). The span at 183–192 (TPERKDELSH) shows a compositional bias: basic and acidic residues.

Belongs to the HAM1 NTPase family. Homodimer. Mg(2+) serves as cofactor.

The catalysed reaction is XTP + H2O = XMP + diphosphate + H(+). It catalyses the reaction dITP + H2O = dIMP + diphosphate + H(+). The enzyme catalyses ITP + H2O = IMP + diphosphate + H(+). Functionally, pyrophosphatase that catalyzes the hydrolysis of nucleoside triphosphates to their monophosphate derivatives, with a high preference for the non-canonical purine nucleotides XTP (xanthosine triphosphate), dITP (deoxyinosine triphosphate) and ITP. Seems to function as a house-cleaning enzyme that removes non-canonical purine nucleotides from the nucleotide pool, thus preventing their incorporation into DNA/RNA and avoiding chromosomal lesions. In Corynebacterium urealyticum (strain ATCC 43042 / DSM 7109), this protein is dITP/XTP pyrophosphatase.